A 103-amino-acid chain; its full sequence is MYAVIVTGGKQYKVAPGEYLKIEKLEIATGESVTFDRVLLVGNGDDVNIGAPVVAGATVVAEVVSQGRHDKVRIIKFRRRKHHMKRMGHRQWYTEIKITGIQA.

The protein belongs to the bacterial ribosomal protein bL21 family. In terms of assembly, part of the 50S ribosomal subunit. Contacts protein L20.

Its function is as follows. This protein binds to 23S rRNA in the presence of protein L20. The polypeptide is Large ribosomal subunit protein bL21 (Pseudomonas syringae pv. syringae (strain B728a)).